The chain runs to 210 residues: Large ribosomal subunit protein uL3 (210 aa).

Residues 120 to 143 are disordered; that stretch reads FQGNIKKDGQSRGPMGHGSRYHRR.

This sequence belongs to the universal ribosomal protein uL3 family. In terms of assembly, part of the 50S ribosomal subunit. Forms a cluster with proteins L14 and L19.

Functionally, one of the primary rRNA binding proteins, it binds directly near the 3'-end of the 23S rRNA, where it nucleates assembly of the 50S subunit. This Latilactobacillus sakei subsp. sakei (strain 23K) (Lactobacillus sakei subsp. sakei) protein is Large ribosomal subunit protein uL3.